The primary structure comprises 514 residues: 2,3-bisphosphoglycerate-independent phosphoglycerate mutase (514 aa).

Residues D13 and S69 each coordinate Mn(2+). S69 functions as the Phosphoserine intermediate in the catalytic mechanism. Substrate is bound by residues H128, 158–159, R189, R195, 263–266, and K336; these read RD and RADR. 5 residues coordinate Mn(2+): D402, H406, D443, H444, and H461.

This sequence belongs to the BPG-independent phosphoglycerate mutase family. As to quaternary structure, monomer. It depends on Mn(2+) as a cofactor.

It carries out the reaction (2R)-2-phosphoglycerate = (2R)-3-phosphoglycerate. The protein operates within carbohydrate degradation; glycolysis; pyruvate from D-glyceraldehyde 3-phosphate: step 3/5. Catalyzes the interconversion of 2-phosphoglycerate and 3-phosphoglycerate. The polypeptide is 2,3-bisphosphoglycerate-independent phosphoglycerate mutase (Akkermansia muciniphila (strain ATCC BAA-835 / DSM 22959 / JCM 33894 / BCRC 81048 / CCUG 64013 / CIP 107961 / Muc)).